The primary structure comprises 199 residues: Urease accessory protein UreG (199 aa).

8-15 (GPVGSGKT) serves as a coordination point for GTP.

The protein belongs to the SIMIBI class G3E GTPase family. UreG subfamily. Homodimer. UreH, UreF and UreG form a complex that acts as a GTP-hydrolysis-dependent molecular chaperone, activating the urease apoprotein by helping to assemble the nickel containing metallocenter of UreC. The UreE protein probably delivers the nickel.

It localises to the cytoplasm. In terms of biological role, facilitates the functional incorporation of the urease nickel metallocenter. This process requires GTP hydrolysis, probably effectuated by UreG. The protein is Urease accessory protein UreG of Helicobacter pylori (strain P12).